The primary structure comprises 693 residues: Follicle-stimulating hormone receptor (693 aa).

The first 18 residues, 1–18, serve as a signal peptide directing secretion; that stretch reads MFLVFTCSLILLASCSSC. 2 disulfide bridges follow: Cys18–Cys25 and Cys23–Cys32. Residues 19–46 form the LRRNT domain; it reads QHHTCHCAGRIFICQESKVVQLPRDIPT. Over 19–366 the chain is Extracellular; that stretch reads QHHTCHCAGR…EDIMGYTILR (348 aa). An N-linked (GlcNAc...) asparagine glycan is attached at Asn47. LRR repeat units follow at residues 49–72, 73–97, 98–118, 119–143, 144–169, 170–192, 193–216, 217–240, and 241–259; these read TELRFVLTKMRVIPKGAFAGLLDL, EKIEISQNDALEVIEAKVFSNLPKL, HEIRIEKANNLVYIDQDAFQH, LPSLRYLLISNTGLRFLPVVQKVHS, FQKVLLDIQDNINIRTIERNSFMGLS, SESVILWLNKNGIQEIENHAFNG, TYLDELNLSDNQNLEKLPNEVFQG, ANGPVVLDISRTKISFLPGHGLEL, and IKKLRARSTYNLKKLPDLS. N-linked (GlcNAc...) asparagine glycans are attached at residues Asn191 and Asn199. Asn268 carries an N-linked (GlcNAc...) asparagine glycan. 4 disulfides stabilise this stretch: Cys275–Cys346, Cys276–Cys292, Cys276–Cys356, and Cys292–Cys338. A helical transmembrane segment spans residues 367–387; sequence VLIWFISILAITGNIVVLIIL. Residues 388-398 lie on the Cytoplasmic side of the membrane; the sequence is ISSQYKLTVPR. A helical membrane pass occupies residues 399–421; the sequence is FLMCNLAFADLCIGIYLLFIASV. The Extracellular portion of the chain corresponds to 422–443; that stretch reads DIQTKSQYYNYAIDWQTGAGCN. An intrachain disulfide couples Cys442 to Cys517. The helical transmembrane segment at 444–465 threads the bilayer; it reads AAGFFTVFASELSVYTLTVITL. At 466 to 485 the chain is on the cytoplasmic side; that stretch reads ERWHTITYAMQLDRKVRFRH. Residues 486–508 form a helical membrane-spanning segment; it reads AVIIMIFGWMFAFTVALLPIFGV. Residues 509-528 are Extracellular-facing; that stretch reads SSYMKVSICLPMDIETPFSQ. The chain crosses the membrane as a helical span at residues 529 to 550; that stretch reads AYVIFLLVLNVLAFVIICACYI. Residues 551 to 573 lie on the Cytoplasmic side of the membrane; that stretch reads CIYFTVRNPNVISSNSDTKIAKR. A helical transmembrane segment spans residues 574–597; sequence MAILIFTDFLCMAPISFFAISASL. Topologically, residues 598–608 are extracellular; it reads KVPLITVSKSK. The chain crosses the membrane as a helical span at residues 609 to 630; it reads ILLVLFYPINSCANPFLYAIFT. Residues 631 to 693 lie on the Cytoplasmic side of the membrane; sequence KTFRRDFFIL…YSLVPLNHLN (63 aa).

This sequence belongs to the G-protein coupled receptor 1 family. FSH/LSH/TSH subfamily. As to quaternary structure, homotrimer. Functions as a homotrimer binding the FSH hormone heterodimer composed of CGA and FSHB.

Its subcellular location is the cell membrane. G protein-coupled receptor for follitropin, the follicle-stimulating hormone. Through cAMP production activates the downstream PI3K-AKT and ERK1/ERK2 signaling pathways. The polypeptide is Follicle-stimulating hormone receptor (FSHR) (Cairina moschata (Muscovy duck)).